The chain runs to 220 residues: Probable glutathione S-transferase parA (220 aa).

A GST N-terminal domain is found at 4-83 (NNVVLLDFWP…YIDEVWHDKC (80 aa)). Glutathione-binding positions include Ser14, Lys41, Ile55, and 67–68 (ES). The region spanning 89–209 (DPYERSQARF…LPHPHKIYGF (121 aa)) is the GST C-terminal domain.

Belongs to the GST superfamily. HSP26 family.

The enzyme catalyses RX + glutathione = an S-substituted glutathione + a halide anion + H(+). The chain is Probable glutathione S-transferase parA (PARA) from Nicotiana tabacum (Common tobacco).